We begin with the raw amino-acid sequence, 31 residues long: Cytochrome b6-f complex subunit 8 (31 aa).

The chain crosses the membrane as a helical span at residues 5–25; the sequence is IVSMAWAALMVVFTFSLSLVI.

It belongs to the PetN family. In terms of assembly, the 4 large subunits of the cytochrome b6-f complex are cytochrome b6, subunit IV (17 kDa polypeptide, PetD), cytochrome f and the Rieske protein, while the 4 small subunits are PetG, PetL, PetM and PetN. The complex functions as a dimer.

Its subcellular location is the plastid membrane. Functionally, component of the cytochrome b6-f complex, which mediates electron transfer between photosystem II (PSII) and photosystem I (PSI), cyclic electron flow around PSI, and state transitions. This is Cytochrome b6-f complex subunit 8 from Cuscuta gronovii (Common dodder).